The primary structure comprises 373 residues: Cystathionine gamma-synthase/O-acetylhomoserine (thiol)-lyase (373 aa).

Lys-197 carries the post-translational modification N6-(pyridoxal phosphate)lysine.

Belongs to the trans-sulfuration enzymes family. As to quaternary structure, homotetramer. Pyridoxal 5'-phosphate is required as a cofactor.

The protein localises to the cytoplasm. The enzyme catalyses O-acetyl-L-homoserine + L-cysteine = L,L-cystathionine + acetate + H(+). It catalyses the reaction O-acetyl-L-homoserine + hydrogen sulfide = L-homocysteine + acetate. The protein operates within amino-acid biosynthesis; L-methionine biosynthesis via de novo pathway. Functionally, catalyzes the formation of L-cystathionine from O-acetyl-L-homoserine and L-cysteine. Cannot use O-succinyl-L-homoserine as substrate. Also exhibits O-acetylhomoserine thiolyase activity, catalyzing the synthesis of L-homocysteine from O-acetyl-L-homoserine and sulfide. In Bacillus subtilis (strain 168), this protein is Cystathionine gamma-synthase/O-acetylhomoserine (thiol)-lyase (metI).